Reading from the N-terminus, the 228-residue chain is Endonuclease V (228 aa).

Mg(2+) is bound by residues D43 and D109.

The protein belongs to the endonuclease V family. Mg(2+) is required as a cofactor.

It localises to the cytoplasm. The enzyme catalyses Endonucleolytic cleavage at apurinic or apyrimidinic sites to products with a 5'-phosphate.. Functionally, DNA repair enzyme involved in the repair of deaminated bases. Selectively cleaves double-stranded DNA at the second phosphodiester bond 3' to a deoxyinosine leaving behind the intact lesion on the nicked DNA. This chain is Endonuclease V, found in Dictyoglomus turgidum (strain DSM 6724 / Z-1310).